A 138-amino-acid polypeptide reads, in one-letter code: Ribonuclease kappa-A (138 aa).

Residues 1-24 (MVLYFSPVLTFFLANFFNSKSTTT) form the signal peptide. Topologically, residues 25–75 (ENLQVFLVENQHRDSKRKINPTFSKKGIEVRQQNENLWSKIVALRFDYSVW) are extracellular. A helical membrane pass occupies residues 76–96 (GIIQLVLMMGLFFYINSVALI). At 97–138 (EDLPIDEEFNSVEEFYTAATSAYNQNAYTVGLPVHLCAYASI) the chain is on the cytoplasmic side.

Belongs to the RNase K family.

The protein localises to the membrane. Endoribonuclease. This chain is Ribonuclease kappa-A, found in Ceratitis capitata (Mediterranean fruit fly).